Consider the following 172-residue polypeptide: Large ribosomal subunit protein uL10 (172 aa).

Belongs to the universal ribosomal protein uL10 family. In terms of assembly, part of the ribosomal stalk of the 50S ribosomal subunit. The N-terminus interacts with L11 and the large rRNA to form the base of the stalk. The C-terminus forms an elongated spine to which L12 dimers bind in a sequential fashion forming a multimeric L10(L12)X complex.

Functionally, forms part of the ribosomal stalk, playing a central role in the interaction of the ribosome with GTP-bound translation factors. This chain is Large ribosomal subunit protein uL10, found in Chlorobium phaeobacteroides (strain DSM 266 / SMG 266 / 2430).